Consider the following 463-residue polypeptide: Phosphomannomutase/phosphoglucomutase (463 aa).

Y17 contacts alpha-D-glucose 1-phosphate. Y17 serves as a coordination point for alpha-D-mannose 1-phosphate. S108 serves as the catalytic Non-phosphorylated intermediate. The Mg(2+) site is built by S108, D242, D244, and D246. S108 bears the Phosphoserine mark. Alpha-D-glucose 1-phosphate contacts are provided by residues K285, H308, 325–329, and 421–425; these read EMSGH and RASNT. Alpha-D-mannose 1-phosphate-binding positions include H308, 325 to 329, and 421 to 425; these read EMSGH and RASNT.

This sequence belongs to the phosphohexose mutase family. Monomer. Requires Mg(2+) as cofactor.

The catalysed reaction is alpha-D-mannose 1-phosphate = D-mannose 6-phosphate. It carries out the reaction alpha-D-glucose 1-phosphate = alpha-D-glucose 6-phosphate. It functions in the pathway nucleotide-sugar biosynthesis; GDP-alpha-D-mannose biosynthesis; alpha-D-mannose 1-phosphate from D-fructose 6-phosphate: step 2/2. It participates in bacterial outer membrane biogenesis; lipopolysaccharide biosynthesis. Functionally, highly reversible phosphoryltransferase. The phosphomannomutase activity produces a precursor for alginate polymerization, the alginate layer causes a mucoid phenotype and provides a protective barrier against host immune defenses and antibiotics. Also involved in core lipopolysaccaride (LPS) biosynthesis due to its phosphoglucomutase activity. Essential for rhamnolipid production, an exoproduct correlated with pathogenicity. Required for biofilm production. The reaction proceeds via 2 processive phosphoryl transferase reactions; first from enzyme-phospho-Ser-108 to the substrate (generating a bisphosphorylated substrate intermediate and a dephosphorylated enzyme), a 180 degree rotation of the intermediate (probably aided by movement of domain 4), and subsequent transfer of phosphate back to the enzyme. The sequence is that of Phosphomannomutase/phosphoglucomutase (algC) from Pseudomonas aeruginosa (strain UCBPP-PA14).